The primary structure comprises 854 residues: DNA mismatch repair protein MutS (854 aa).

Gly614–Ser621 contacts ATP.

Belongs to the DNA mismatch repair MutS family.

Functionally, this protein is involved in the repair of mismatches in DNA. It is possible that it carries out the mismatch recognition step. This protein has a weak ATPase activity. The polypeptide is DNA mismatch repair protein MutS (Sodalis glossinidius (strain morsitans)).